Consider the following 704-residue polypeptide: Elongation factor G (704 aa).

Residues Ala8 to Val290 enclose the tr-type G domain. GTP contacts are provided by residues Ala17–Thr24, Asp88–His92, and Asn142–Asp145. Residues Lys504 and Lys643 each carry the N6-acetyllysine modification.

The protein belongs to the TRAFAC class translation factor GTPase superfamily. Classic translation factor GTPase family. EF-G/EF-2 subfamily.

The protein localises to the cytoplasm. Functionally, catalyzes the GTP-dependent ribosomal translocation step during translation elongation. During this step, the ribosome changes from the pre-translocational (PRE) to the post-translocational (POST) state as the newly formed A-site-bound peptidyl-tRNA and P-site-bound deacylated tRNA move to the P and E sites, respectively. Catalyzes the coordinated movement of the two tRNA molecules, the mRNA and conformational changes in the ribosome. This is Elongation factor G from Escherichia coli O17:K52:H18 (strain UMN026 / ExPEC).